Reading from the N-terminus, the 472-residue chain is MNVGEVVQIIGVVVDVRFPPGQVPEIYNALTIETDKVDAFGRKFNLTLEVAQHLGNNVVRTVAMSTTDGLVRGAKVVDTGAPIKVPVGRPVLGRLIDVLGMPIDGLGDIKAETYYPIHRPAPALVDQSTKVEQLETGLKVIDLLVPFMKGGKIGMFGGAGVGKTVIVMELINNIAKQHGGISVFAGVGERTREGNELLLEMTEAGVLDKTMMVFGQMNEPPGCRLRVGLTGLCLAEYFRDEEGADVLIFIDNIFRFAQAGTEVSALLGRMPSAVGYQPTLATEMGQLQERITSTTKGSITSVQAVYVPADDLTDPAPANTFAHLDGTVVLSRQIAELGIYPAVDPLDSVSRILDPNVVGQEHYQVARGVQKVLQRYKELQDIIAILGMEELSEEDKLIVARARKLQRYLSQPFHVAEAFTGTPGRYVSLKDNIRGFQEILDGKHDGLPEDAFYMVGTIEEAVEKGKKILEAS.

157-164 (GGAGVGKT) contacts ATP.

It belongs to the ATPase alpha/beta chains family. F-type ATPases have 2 components, CF(1) - the catalytic core - and CF(0) - the membrane proton channel. CF(1) has five subunits: alpha(3), beta(3), gamma(1), delta(1), epsilon(1). CF(0) has three main subunits: a(1), b(2) and c(9-12). The alpha and beta chains form an alternating ring which encloses part of the gamma chain. CF(1) is attached to CF(0) by a central stalk formed by the gamma and epsilon chains, while a peripheral stalk is formed by the delta and b chains.

The protein localises to the cell membrane. It catalyses the reaction ATP + H2O + 4 H(+)(in) = ADP + phosphate + 5 H(+)(out). Produces ATP from ADP in the presence of a proton gradient across the membrane. The catalytic sites are hosted primarily by the beta subunits. This is ATP synthase subunit beta from Desulforudis audaxviator (strain MP104C).